Here is a 256-residue protein sequence, read N- to C-terminus: Cilia- and flagella-associated protein 410 (256 aa).

LRR repeat units lie at residues 19–40 (SVRK…QEMP), 41–62 (SLEV…SRCQ), and 63–84 (RLSE…FYLK). The region spanning 97–137 (NPCCGTSPHRYRMTVLRTLPRLQKLDNQAVTEEELSRALSE) is the LRRCT domain. Disordered regions lie at residues 129 to 156 (EELS…GGPK) and 168 to 212 (AETG…SSHR). Phosphoserine occurs at positions 136 and 177.

In terms of assembly, found in a complex with CFAP410, NEK1 and SPATA7. Interacts with NEK1. Widely expressed. Expressed in the retina.

The protein resides in the mitochondrion. The protein localises to the cytoplasm. It is found in the cytoskeleton. It localises to the cilium basal body. Its subcellular location is the cell projection. The protein resides in the cilium. The protein localises to the photoreceptor outer segment. Its function is as follows. Plays a role in cilia formation and/or maintenance. Plays a role in the regulation of cell morphology and cytoskeletal organization. Involved in DNA damage repair. The polypeptide is Cilia- and flagella-associated protein 410 (Homo sapiens (Human)).